The primary structure comprises 516 residues: Bifunctional purine biosynthesis protein PurH (516 aa).

The MGS-like domain occupies 1–149; sequence MSERQPIRRA…KNHANVAVLT (149 aa).

The protein belongs to the PurH family.

It catalyses the reaction (6R)-10-formyltetrahydrofolate + 5-amino-1-(5-phospho-beta-D-ribosyl)imidazole-4-carboxamide = 5-formamido-1-(5-phospho-D-ribosyl)imidazole-4-carboxamide + (6S)-5,6,7,8-tetrahydrofolate. It carries out the reaction IMP + H2O = 5-formamido-1-(5-phospho-D-ribosyl)imidazole-4-carboxamide. It functions in the pathway purine metabolism; IMP biosynthesis via de novo pathway; 5-formamido-1-(5-phospho-D-ribosyl)imidazole-4-carboxamide from 5-amino-1-(5-phospho-D-ribosyl)imidazole-4-carboxamide (10-formyl THF route): step 1/1. The protein operates within purine metabolism; IMP biosynthesis via de novo pathway; IMP from 5-formamido-1-(5-phospho-D-ribosyl)imidazole-4-carboxamide: step 1/1. The protein is Bifunctional purine biosynthesis protein PurH of Cutibacterium acnes (strain DSM 16379 / KPA171202) (Propionibacterium acnes).